The following is a 306-amino-acid chain: Ribosomal protein L11 methyltransferase (306 aa).

4 residues coordinate S-adenosyl-L-methionine: Thr152, Gly179, Asp201, and Asn243.

Belongs to the methyltransferase superfamily. PrmA family.

The protein localises to the cytoplasm. The enzyme catalyses L-lysyl-[protein] + 3 S-adenosyl-L-methionine = N(6),N(6),N(6)-trimethyl-L-lysyl-[protein] + 3 S-adenosyl-L-homocysteine + 3 H(+). Functionally, methylates ribosomal protein L11. In Geobacter sp. (strain M21), this protein is Ribosomal protein L11 methyltransferase.